A 146-amino-acid chain; its full sequence is 3-dehydroquinate dehydratase (146 aa).

The active-site Proton acceptor is the tyrosine 23. The substrate site is built by asparagine 74, histidine 80, and aspartate 87. Histidine 100 (proton donor) is an active-site residue. Substrate-binding positions include 101 to 102 and arginine 111; that span reads IS.

It belongs to the type-II 3-dehydroquinase family. Homododecamer.

It carries out the reaction 3-dehydroquinate = 3-dehydroshikimate + H2O. It functions in the pathway metabolic intermediate biosynthesis; chorismate biosynthesis; chorismate from D-erythrose 4-phosphate and phosphoenolpyruvate: step 3/7. Catalyzes a trans-dehydration via an enolate intermediate. In Bacillus cereus (strain G9842), this protein is 3-dehydroquinate dehydratase.